A 182-amino-acid chain; its full sequence is Protein canopy homolog 2 (182 aa).

The first 20 residues, 1–20, serve as a signal peptide directing secretion; it reads MKGWGWLALLLGVLLGTAWA. In terms of domain architecture, Saposin B-type spans 24–175; it reads QDLHCGACRA…KRTDLCDHAL (152 aa). Disulfide bonds link cysteine 28/cysteine 171, cysteine 31/cysteine 164, and cysteine 86/cysteine 137. Residue serine 115 is modified to Phosphoserine. The Prevents secretion from ER motif lies at 179–182; it reads HDEL.

The protein belongs to the canopy family. As to quaternary structure, interacts with MYLIP/MIR.

The protein localises to the endoplasmic reticulum. In terms of biological role, positive regulator of neurite outgrowth by stabilizing myosin regulatory light chain (MRLC). It prevents MIR-mediated MRLC ubiquitination and its subsequent proteasomal degradation. The chain is Protein canopy homolog 2 (Cnpy2) from Mus musculus (Mouse).